Consider the following 81-residue polypeptide: Exodeoxyribonuclease 7 small subunit (81 aa).

The protein belongs to the XseB family. In terms of assembly, heterooligomer composed of large and small subunits.

It is found in the cytoplasm. It catalyses the reaction Exonucleolytic cleavage in either 5'- to 3'- or 3'- to 5'-direction to yield nucleoside 5'-phosphates.. Its function is as follows. Bidirectionally degrades single-stranded DNA into large acid-insoluble oligonucleotides, which are then degraded further into small acid-soluble oligonucleotides. The chain is Exodeoxyribonuclease 7 small subunit from Ruegeria sp. (strain TM1040) (Silicibacter sp.).